The sequence spans 131 residues: Aspartate 1-decarboxylase (131 aa).

Residue S25 is the Schiff-base intermediate with substrate; via pyruvic acid of the active site. Position 25 is a pyruvic acid (Ser) (S25). T57 serves as a coordination point for substrate. The active-site Proton donor is Y58. 73 to 75 serves as a coordination point for substrate; sequence GAA.

Belongs to the PanD family. Heterooctamer of four alpha and four beta subunits. It depends on pyruvate as a cofactor. In terms of processing, is synthesized initially as an inactive proenzyme, which is activated by self-cleavage at a specific serine bond to produce a beta-subunit with a hydroxyl group at its C-terminus and an alpha-subunit with a pyruvoyl group at its N-terminus.

The protein localises to the cytoplasm. It carries out the reaction L-aspartate + H(+) = beta-alanine + CO2. It participates in cofactor biosynthesis; (R)-pantothenate biosynthesis; beta-alanine from L-aspartate: step 1/1. In terms of biological role, catalyzes the pyruvoyl-dependent decarboxylation of aspartate to produce beta-alanine. The sequence is that of Aspartate 1-decarboxylase from Anaeromyxobacter dehalogenans (strain 2CP-C).